The primary structure comprises 1073 residues: MKTLLLDLALWSLLFQPGWLSFSSQVSQNCHNGSYEISVLMMGNSAFAEPLKNLEDAVNEGLEIVRGRLQNAGLNVTVNATFMYSDGLIHNSGDCRSSTCEGLDLLRKISNAQRMGCVLIGPSCTYSTFQMYLDTELSYPMISAGSFGLSCDYKETLTRLMSPARKLMYFLVNFWKTNDLPFKTYSWSTSYVYKNGTETEDCFWYLNALEASVSYFSHELGFKVVLRQDKEFQDILMDHNRKSNVIIMCGGPEFLYKLKGDRAVAEDIVIILVDLFNDQYFEDNVTAPDYMKNVLVLTLSPGNSLLNSSFSRNLSPTKRDFALAYLNGILLFGHMLKIFLENGENITTPKFAHAFRNLTFEGYDGPVTLDDWGDVDSTMVLLYTSVDTKKYKVLLTYDTHVNKTYPVDMSPTFTWKNSKLPNDITGRGPQILMIAVFTLTGAVVLLLLVALLMLRKYRKDYELRQKKWSHIPPENIFPLETNETNHVSLKIDDDKRRDTIQRLRQCKYDKKRVILKDLKHNDGNFTEKQKIELNKLLQIDYYNLTKFYGTVKLDTMIFGVIEYCERGSLREVLNDTISYPDGTFMDWEFKISVLYDIAKGMSYLHSSKTEVHGRLKSTNCVVDSRMVVKITDFGCNSILPPKKDLWTAPEHLRQANISQKGDVYSYGIIAQEIILRKETFYTLSCRDRNEKIFRVENSNGMKPFRPDLFLETAEEKELEVYLLVKNCWEEDPEKRPDFKKIETTLAKIFGLFHDQKNESYMDTLIRRLQLYSRNLEHLVEERTQLYKAERDRADRLNFMLLPRLVVKSLKEKGFVEPELYEEVTIYFSDIVGFTTICKYSTPMEVVDMLNDIYKSFDHIVDHHDVYKVETIGDAYMVASGLPKRNGNRHAIDIAKMALEILSFMGTFELEHLPGLPIWIRIGVHSGPCAAGVVGIKMPRYCLFGDTVNTASRMESTGLPLRIHVSGSTIAILKRTECQFLYEVRGETYLKGRGNETTYWLTGMKDQKFNLPTPPTVENQQRLQAEFSDMIANSLQKRQAAGIRSQKPRRVASYKKGTLEYLQLNTTDKESTYF.

The N-terminal stretch at 1–23 (MKTLLLDLALWSLLFQPGWLSFS) is a signal peptide. The Extracellular segment spans residues 24 to 430 (SQVSQNCHNG…PNDITGRGPQ (407 aa)). N32, N75, N79, N195, N284, N307, N345, and N402 each carry an N-linked (GlcNAc...) asparagine glycan. A helical membrane pass occupies residues 431–454 (ILMIAVFTLTGAVVLLLLVALLML). Residues 455-1073 (RKYRKDYELR…NTTDKESTYF (619 aa)) lie on the Cytoplasmic side of the membrane. Residues 489 to 749 (LKIDDDKRRD…KIETTLAKIF (261 aa)) enclose the Protein kinase domain. The Guanylate cyclase domain maps to 824 to 954 (TIYFSDIVGF…DTVNTASRME (131 aa)).

Belongs to the adenylyl cyclase class-4/guanylyl cyclase family. Homotrimer. Interacts via its C-terminal region with NHERF4. Interacts with the lectin chaperone VIP36. Glycosylation at Asn-75 and/or Asn-79 is required for interaction with VIP36 while glycosylation at Asn-345 and Asn-402 modulates ligand-mediated GUCY2C activation.

The protein resides in the cell membrane. Its subcellular location is the endoplasmic reticulum membrane. The catalysed reaction is GTP = 3',5'-cyclic GMP + diphosphate. In terms of biological role, guanylyl cyclase that catalyzes synthesis of cyclic GMP (cGMP) from GTP. Receptor for the E.coli heat-stable enterotoxin; E.coli enterotoxin markedly stimulates the accumulation of cGMP in mammalian cells expressing GUCY2C. Also activated by the endogenous peptides guanylin and uroguanylin. The chain is Guanylyl cyclase C from Homo sapiens (Human).